The sequence spans 1036 residues: Mitogen-activated protein kinase kinase kinase 21 (1036 aa).

The tract at residues 1-36 is disordered; that stretch reads MALRGAAGATDTPVSSAGGAPGGSASSSSTSSGGSA. Low complexity predominate over residues 15–36; sequence SSAGGAPGGSASSSSTSSGGSA. An SH3 domain is found at 38–102; sequence AGAGLWAALY…PANYVAPCRP (65 aa). Residues 124–401 enclose the Protein kinase domain; the sequence is LELKELIGAG…ALILEQLTAI (278 aa). ATP is bound by residues 130–138 and K151; that span reads IGAGGFGQV. The Proton acceptor role is filled by D263. Phosphothreonine; by autocatalysis is present on T299. The residue at position 303 (S303) is a Phosphoserine; by autocatalysis and MAP4K1. Leucine-zipper regions lie at residues 425–446 and 460–481; these read IQQM…EEEL and LKRR…ELNI. The interval 517–551 is disordered; it reads SDFQHKITVQASPNLDKRRSLNSSSSSPPSSPTMM. S528, S543, and S547 each carry phosphoserine. T592 is modified (phosphothreonine). S614 carries the phosphoserine modification. Residues 748-763 show a composition bias toward basic and acidic residues; sequence AEEPLPKEEKKKREGI. Disordered stretches follow at residues 748–791 and 923–954; these read AEEP…SSPP and PHSH…RSRS.

This sequence belongs to the protein kinase superfamily. STE Ser/Thr protein kinase family. MAP kinase kinase kinase subfamily. In terms of assembly, homodimer. Interacts with TLR4. It depends on Mg(2+) as a cofactor. Autophosphorylation on serine and threonine residues within the activation loop plays a role in enzyme activation.

The catalysed reaction is L-seryl-[protein] + ATP = O-phospho-L-seryl-[protein] + ADP + H(+). It catalyses the reaction L-threonyl-[protein] + ATP = O-phospho-L-threonyl-[protein] + ADP + H(+). Its activity is regulated as follows. Homodimerization via the leucine zipper domains is required for autophosphorylation and subsequent activation. Negative regulator of TLR4 signaling. Does not activate JNK1/MAPK8 pathway, p38/MAPK14, nor ERK2/MAPK1 pathways. This is Mitogen-activated protein kinase kinase kinase 21 from Homo sapiens (Human).